Here is a 437-residue protein sequence, read N- to C-terminus: Transmembrane protein with metallophosphoesterase domain (437 aa).

5 helical membrane-spanning segments follow: residues 7–27 (LSAE…MLIS), 41–61 (ALLF…LGSL), 87–107 (IIVL…FFLV), 116–136 (LLSF…FVFG), and 164–184 (VLAL…AAQP). A divalent metal cation-binding residues include D211, H213, D243, N274, H376, and H378.

Belongs to the metallophosphoesterase superfamily. LOC643853 family. The cofactor is a divalent metal cation.

The protein resides in the membrane. The sequence is that of Transmembrane protein with metallophosphoesterase domain (tmppe) from Danio rerio (Zebrafish).